Consider the following 164-residue polypeptide: SsrA-binding protein (164 aa).

The disordered stretch occupies residues 141–164 (KLHDKRQDEKQKSIKKEINSALKR). The segment covering 145 to 158 (KRQDEKQKSIKKEI) has biased composition (basic and acidic residues).

This sequence belongs to the SmpB family.

It localises to the cytoplasm. Functionally, required for rescue of stalled ribosomes mediated by trans-translation. Binds to transfer-messenger RNA (tmRNA), required for stable association of tmRNA with ribosomes. tmRNA and SmpB together mimic tRNA shape, replacing the anticodon stem-loop with SmpB. tmRNA is encoded by the ssrA gene; the 2 termini fold to resemble tRNA(Ala) and it encodes a 'tag peptide', a short internal open reading frame. During trans-translation Ala-aminoacylated tmRNA acts like a tRNA, entering the A-site of stalled ribosomes, displacing the stalled mRNA. The ribosome then switches to translate the ORF on the tmRNA; the nascent peptide is terminated with the 'tag peptide' encoded by the tmRNA and targeted for degradation. The ribosome is freed to recommence translation, which seems to be the essential function of trans-translation. This chain is SsrA-binding protein, found in Prochlorococcus marinus (strain AS9601).